We begin with the raw amino-acid sequence, 429 residues long: Trigger factor (429 aa).

The PPIase FKBP-type domain maps to 163 to 248 (GDFVVIDFVG…IKEIKVKETP (86 aa)).

It belongs to the FKBP-type PPIase family. Tig subfamily.

The protein localises to the cytoplasm. The enzyme catalyses [protein]-peptidylproline (omega=180) = [protein]-peptidylproline (omega=0). Its function is as follows. Involved in protein export. Acts as a chaperone by maintaining the newly synthesized protein in an open conformation. Functions as a peptidyl-prolyl cis-trans isomerase. This chain is Trigger factor, found in Halothermothrix orenii (strain H 168 / OCM 544 / DSM 9562).